The following is a 150-amino-acid chain: Large ribosomal subunit protein bL9 (150 aa).

Belongs to the bacterial ribosomal protein bL9 family.

Its function is as follows. Binds to the 23S rRNA. The sequence is that of Large ribosomal subunit protein bL9 from Methylibium petroleiphilum (strain ATCC BAA-1232 / LMG 22953 / PM1).